We begin with the raw amino-acid sequence, 227 residues long: Ribonuclease HII (227 aa).

One can recognise an RNase H type-2 domain in the interval 1-210 (MKLAGIDEAG…LKKIEEKLAK (210 aa)). A divalent metal cation-binding residues include aspartate 7, glutamate 8, and aspartate 105.

This sequence belongs to the RNase HII family. It depends on Mn(2+) as a cofactor. Mg(2+) is required as a cofactor.

It localises to the cytoplasm. It catalyses the reaction Endonucleolytic cleavage to 5'-phosphomonoester.. Functionally, endonuclease that specifically degrades the RNA of RNA-DNA hybrids. This chain is Ribonuclease HII, found in Thermococcus onnurineus (strain NA1).